The sequence spans 139 residues: Protocatechuate 4,5-dioxygenase alpha chain (139 aa).

Composed of two subunits (alpha and beta) in a 1:1 ratio. Requires Fe(2+) as cofactor.

The enzyme catalyses 3,4-dihydroxybenzoate + O2 = 4-carboxy-2-hydroxy-cis,cis-muconate 6-semialdehyde + H(+). Responsible for the aromatic ring fission of protocatechuate. This is Protocatechuate 4,5-dioxygenase alpha chain (ligA) from Sphingobium sp. (strain NBRC 103272 / SYK-6).